Consider the following 429-residue polypeptide: Serine--tRNA ligase (429 aa).

235–237 (TAE) contributes to the L-serine binding site. Residue 266-268 (RSE) participates in ATP binding. An L-serine-binding site is contributed by Glu289. 353–356 (EISS) is a binding site for ATP. Ser389 serves as a coordination point for L-serine.

Belongs to the class-II aminoacyl-tRNA synthetase family. Type-1 seryl-tRNA synthetase subfamily. In terms of assembly, homodimer. The tRNA molecule binds across the dimer.

Its subcellular location is the cytoplasm. The catalysed reaction is tRNA(Ser) + L-serine + ATP = L-seryl-tRNA(Ser) + AMP + diphosphate + H(+). It catalyses the reaction tRNA(Sec) + L-serine + ATP = L-seryl-tRNA(Sec) + AMP + diphosphate + H(+). It functions in the pathway aminoacyl-tRNA biosynthesis; selenocysteinyl-tRNA(Sec) biosynthesis; L-seryl-tRNA(Sec) from L-serine and tRNA(Sec): step 1/1. Functionally, catalyzes the attachment of serine to tRNA(Ser). Is also able to aminoacylate tRNA(Sec) with serine, to form the misacylated tRNA L-seryl-tRNA(Sec), which will be further converted into selenocysteinyl-tRNA(Sec). The chain is Serine--tRNA ligase from Histophilus somni (strain 2336) (Haemophilus somnus).